We begin with the raw amino-acid sequence, 373 residues long: tRNA-specific 2-thiouridylase MnmA (373 aa).

Residues 12 to 19 (GMSGGVDS) and Met38 contribute to the ATP site. Positions 98–100 (NPD) are interaction with target base in tRNA. Cys103 functions as the Nucleophile in the catalytic mechanism. Residues Cys103 and Cys200 are joined by a disulfide bond. Gly127 contacts ATP. An interaction with tRNA region spans residues 150–152 (KDQ). The Cysteine persulfide intermediate role is filled by Cys200. The interval 312–313 (RY) is interaction with tRNA.

It belongs to the MnmA/TRMU family.

It is found in the cytoplasm. It carries out the reaction S-sulfanyl-L-cysteinyl-[protein] + uridine(34) in tRNA + AH2 + ATP = 2-thiouridine(34) in tRNA + L-cysteinyl-[protein] + A + AMP + diphosphate + H(+). Its function is as follows. Catalyzes the 2-thiolation of uridine at the wobble position (U34) of tRNA, leading to the formation of s(2)U34. In Streptococcus uberis (strain ATCC BAA-854 / 0140J), this protein is tRNA-specific 2-thiouridylase MnmA.